The following is an 800-amino-acid chain: Putative antiporter subunit mnhA2 (800 aa).

Helical transmembrane passes span 1 to 21 (MSLV…LLMS), 33 to 53 (IALV…PSVA), 78 to 98 (GLSL…FFYA), 118 to 138 (LFMF…MYIF), 167 to 187 (FMIT…LYIM), 207 to 227 (GLFI…SAQF), 241 to 261 (TPVS…FLLL), 273 to 293 (YIYI…ITAL), 300 to 320 (GILA…VGIG), 331 to 351 (IASI…NHAI), 387 to 407 (LVMT…GFLS), 424 to 444 (FSLI…IFTF), 472 to 492 (PWLF…IFFV), 527 to 547 (GFNI…VLAI), 595 to 615 (IIMT…RIGL), 627 to 647 (GALE…LIFI), 651 to 671 (LTMV…FIAM), 676 to 696 (LALT…VSFS), 712 to 732 (IIKI…IFIT), and 768 to 788 (LDTL…YTLL).

This sequence belongs to the CPA3 antiporters (TC 2.A.63) subunit A family. In terms of assembly, may form a heterooligomeric complex that consists of seven subunits: mnhA2, mnhB2, mnhC2, mnhD2, mnhE2, mnhF2 and mnhG2.

It localises to the cell membrane. The protein is Putative antiporter subunit mnhA2 (mnhA2) of Staphylococcus aureus (strain Mu3 / ATCC 700698).